The chain runs to 620 residues: Glutathione-regulated potassium-efflux system protein KefC (620 aa).

12 consecutive transmembrane segments (helical) span residues 4–24 (HTLI…PIAV), 26–46 (LGLG…PWGL), 54–74 (SILH…GLEL), 90–110 (GALQ…LLGL), 114–134 (VAEL…MQAM), 149–169 (FAVL…IPLL), 178–198 (MGAF…VVLL), 218–238 (VFSA…EEVG), 270–290 (GLLL…GTLI), 294–314 (LRIV…LWLI), 327–347 (WFAV…GAAQ), and 359–379 (SLTL…VILN). Positions 399–518 (QPRVIIAGFG…AGVEKPERET (120 aa)) constitute an RCK N-terminal domain. Residues 597–620 (GWQGTEEGKHTGNMADEPETKPSS) form a disordered region.

The protein belongs to the monovalent cation:proton antiporter 2 (CPA2) transporter (TC 2.A.37) family. KefC subfamily. Homodimer. Interacts with the regulatory subunit KefF.

It is found in the cell inner membrane. Its function is as follows. Pore-forming subunit of a potassium efflux system that confers protection against electrophiles. Catalyzes K(+)/H(+) antiport. This chain is Glutathione-regulated potassium-efflux system protein KefC, found in Escherichia coli (strain SMS-3-5 / SECEC).